Here is a 560-residue protein sequence, read N- to C-terminus: Membrane protein insertase YidC (560 aa).

Residues 1–21 form a helical membrane-spanning segment; sequence MDIKRTILIAALAVVSYVMVL. Residues 42–66 are disordered; it reads VAPGLPDGVPAGNNGASADVPSANA. A run of 5 helical transmembrane segments spans residues 341-361, 367-387, 437-457, 468-488, and 515-535; these read LELT…FWLL, LLGN…GLFF, LGGC…YWVL, WMLW…PIIM, and PIIF…YWVV.

This sequence belongs to the OXA1/ALB3/YidC family. Type 1 subfamily. In terms of assembly, interacts with the Sec translocase complex via SecD. Specifically interacts with transmembrane segments of nascent integral membrane proteins during membrane integration.

Its subcellular location is the cell inner membrane. In terms of biological role, required for the insertion and/or proper folding and/or complex formation of integral membrane proteins into the membrane. Involved in integration of membrane proteins that insert both dependently and independently of the Sec translocase complex, as well as at least some lipoproteins. Aids folding of multispanning membrane proteins. This is Membrane protein insertase YidC from Pseudomonas putida (strain GB-1).